Here is a 750-residue protein sequence, read N- to C-terminus: GRIP and coiled-coil domain-containing protein C27D7.02c (750 aa).

Disordered regions lie at residues 14 to 53 (AQGQ…AKNM) and 188 to 280 (KTVE…RDIA). Composition is skewed to basic and acidic residues over residues 18 to 34 (EEAK…DQLR) and 188 to 198 (KTVETKNDVPE). Positions 28–182 (QEEDQLRRNN…AQSIEQEVIS (155 aa)) form a coiled coil. Residues 201–213 (RPSTDTIGVSSAL) show a composition bias toward polar residues. The stretch at 213 to 243 (LSKKKKKRNRKNQKKKSTKQNIEATTENDAL) forms a coiled coil. Basic residues predominate over residues 214-230 (SKKKKKRNRKNQKKKST). Polar residues predominate over residues 233 to 251 (NIEATTENDALSESISTPD). A compositionally biased stretch (basic and acidic residues) spans 269–280 (ADSKEEERRDIA). Residues 344 to 665 (KLVEELTKQL…YEHLQKSFKN (322 aa)) adopt a coiled-coil conformation. The disordered stretch occupies residues 672 to 703 (KQQPSNHGRNSSVSRSSSSVEVNSKHPGSDDM). A compositionally biased stretch (low complexity) spans 676-693 (SNHGRNSSVSRSSSSVEV). The segment covering 694–703 (NSKHPGSDDM) has biased composition (basic and acidic residues). The region spanning 700–748 (SDDMLIDKEYTRNILFQFLEQRDRRPEIVNLLSILLDLSEEQKQKLLSV) is the GRIP domain.

The protein localises to the cytoplasm. The sequence is that of GRIP and coiled-coil domain-containing protein C27D7.02c from Schizosaccharomyces pombe (strain 972 / ATCC 24843) (Fission yeast).